The chain runs to 314 residues: Lipoyl synthase (314 aa).

Residues Cys-60, Cys-65, Cys-71, Cys-86, Cys-90, Cys-93, and Ser-300 each coordinate [4Fe-4S] cluster. Residues 72–289 (FRKGTATFMI…RQFGLSIGFS (218 aa)) enclose the Radical SAM core domain.

The protein belongs to the radical SAM superfamily. Lipoyl synthase family. The cofactor is [4Fe-4S] cluster.

The protein localises to the cytoplasm. The enzyme catalyses [[Fe-S] cluster scaffold protein carrying a second [4Fe-4S](2+) cluster] + N(6)-octanoyl-L-lysyl-[protein] + 2 oxidized [2Fe-2S]-[ferredoxin] + 2 S-adenosyl-L-methionine + 4 H(+) = [[Fe-S] cluster scaffold protein] + N(6)-[(R)-dihydrolipoyl]-L-lysyl-[protein] + 4 Fe(3+) + 2 hydrogen sulfide + 2 5'-deoxyadenosine + 2 L-methionine + 2 reduced [2Fe-2S]-[ferredoxin]. It participates in protein modification; protein lipoylation via endogenous pathway; protein N(6)-(lipoyl)lysine from octanoyl-[acyl-carrier-protein]: step 2/2. Catalyzes the radical-mediated insertion of two sulfur atoms into the C-6 and C-8 positions of the octanoyl moiety bound to the lipoyl domains of lipoate-dependent enzymes, thereby converting the octanoylated domains into lipoylated derivatives. This Pelobacter propionicus (strain DSM 2379 / NBRC 103807 / OttBd1) protein is Lipoyl synthase.